The sequence spans 957 residues: MHVCCPPVTLEQDLHRKMHSWMLQTLAFAVTSLVLSCAETIDYYGEICDNACPCEEKDGILTVSCENRGIISLSEISPPRFPIYHLLLSGNLLSRLYPNEFVNYTGASILHLGSNVIQDIETGAFHGLRGLRRLHLNNNKLELLRDDTFLGLENLEYLQVDYNYISVIEPNAFGKLHMLQVLILNDNLLSGLPNNLFRFVPLTHLDLRGNRLKLLPYVGLLQHMDKVVELQLEENPWNCSCELISLKDWLDSISYSALVGDVVCETPFRLHGRDLDEVSKQELCPRKLISDYEMRPQTPLSTTGYLHTTPASVNSVATSSSAVYKPPLKPPKGTRQPNKPRVRPTSRQPSKDLGYSNYGPSIAYQTKSPVPLECPTACTCNLQISDLGLNVNCQERKIESIAELQPKPYNPKKMYLTENYITVVRRTDFLEATGLDLLHLGNNRISMIQDRAFGDLGNLRRLYLNGNRIERLSPELFYGLQSLQYLFLQYNLIREIQAGTFDPVPNLQLLFLNNNQLQAMPSGVFSGLTLLRLNLRGNSFTSLPVSGVLDQLTSLIQIDLHDNPWDCTCDVVGMKLWIEQLKVGVLVDEVICKAPKKFAETYMRSIKSELLCPDYSDVVVSTPTPSSIQVPSRTNAATPAVRLNSTGTPAGLGAGTGASSVPLSVLILSLLLVFIMSVFVAAGLFVLVMKRRKKNQSDHTSTNNSDVSSFNMQYSVYGGGGGGGGGHPHAHVHHRGPALPKVKTPAGHVYEYIPHPLGHMCKNPIYRSREGNSVEDYKDLHELKVTYSSNHHLQQQPPPPPQQPQQQPPPQMQMQPGEEERRESHHLRSPAYSVSTIEPREDLLSPVQDADRFYRGILEPDKHCSTTPAGSSLPEYPKFPCSPAAYTFSPNYDLRRPHQYLHPGAGESRLREPVLYSPPGAVFVEPNRNEYLELKAKLNVEPDYLEVLEKQTTFSQF.

The N-terminal stretch at 1–40 (MHVCCPPVTLEQDLHRKMHSWMLQTLAFAVTSLVLSCAET) is a signal peptide. Residues 41–664 (IDYYGEICDN…GTGASSVPLS (624 aa)) lie on the Extracellular side of the membrane. 6 LRR repeats span residues 82 to 103 (PIYH…EFVN), 106 to 127 (GASI…AFHG), 130 to 151 (GLRR…TFLG), 154 to 175 (NLEY…AFGK), 178 to 199 (MLQV…LFRF), and 201 to 222 (PLTH…GLLQ). A glycan (N-linked (GlcNAc...) asparagine) is linked at N103. Residues 235–286 (NPWNCSCELISLKDWLDSISYSALVGDVVCETPFRLHGRDLDEVSKQELCPR) form the LRRCT 1 domain. Residues 317-358 (ATSSSAVYKPPLKPPKGTRQPNKPRVRPTSRQPSKDLGYSNY) are disordered. The LRRNT domain maps to 365-407 (QTKSPVPLECPTACTCNLQISDLGLNVNCQERKIESIAELQPK). LRR repeat units lie at residues 410 to 431 (NPKK…DFLE), 434 to 455 (GLDL…AFGD), 458 to 479 (NLRR…LFYG), 482 to 503 (SLQY…TFDP), 506 to 527 (NLQL…VFSG), and 529 to 550 (TLLR…GVLD). The 52-residue stretch at 563-614 (NPWDCTCDVVGMKLWIEQLKVGVLVDEVICKAPKKFAETYMRSIKSELLCPD) folds into the LRRCT 2 domain. The segment covering 623-632 (PTPSSIQVPS) has biased composition (low complexity). The tract at residues 623–642 (PTPSSIQVPSRTNAATPAVR) is disordered. An N-linked (GlcNAc...) asparagine glycan is attached at N644. The helical transmembrane segment at 665-685 (VLILSLLLVFIMSVFVAAGLF) threads the bilayer. The Cytoplasmic portion of the chain corresponds to 686–957 (VLVMKRRKKN…LEKQTTFSQF (272 aa)). The interval 789-844 (SNHHLQQQPPPPPQQPQQQPPPQMQMQPGEEERRESHHLRSPAYSVSTIEPREDLL) is disordered. Over residues 796–811 (QPPPPPQQPQQQPPPQ) the composition is skewed to pro residues.

It belongs to the SLITRK family. In terms of tissue distribution, in the adult, significant expression is detected only in the brain. In the embryo, expressed in the subventricular zone, cortical plate, pyramidal layer of hippocampus, thalamus and hypothalamus.

Its subcellular location is the membrane. Suppresses neurite outgrowth. The polypeptide is SLIT and NTRK-like protein 5 (Slitrk5) (Mus musculus (Mouse)).